Reading from the N-terminus, the 616-residue chain is Chaperone protein DnaK (616 aa).

A Phosphothreonine; by autocatalysis modification is found at threonine 174. Residues 575–616 (QQTQGAQSDPGAAGFGGQQEAPGAGQDENVVDADYKVVDDDK) form a disordered region. Over residues 607–616 (ADYKVVDDDK) the composition is skewed to basic and acidic residues.

The protein belongs to the heat shock protein 70 family.

Functionally, acts as a chaperone. The polypeptide is Chaperone protein DnaK (Ruminiclostridium cellulolyticum (strain ATCC 35319 / DSM 5812 / JCM 6584 / H10) (Clostridium cellulolyticum)).